The following is a 379-amino-acid chain: Cytochrome b (379 aa).

4 helical membrane passes run 33–53 (FGSLLGMCLVLQIFTGLFLAM), 77–98 (WLIRYMHANGASLFFICLYIHI), 113–133 (WNIGILLLFLTMATAFVGYVL), and 178–198 (FFAFHFILPFIIAALATVHLL). The heme b site is built by H83 and H97. Heme b is bound by residues H182 and H196. H201 provides a ligand contact to a ubiquinone. The next 4 membrane-spanning stretches (helical) occupy residues 226–246 (TKDFLGALIXIMFFMTLVLYF), 288–308 (LGGVVALILSILVLALLPYIH), 320–340 (ISQFLFWTLVSDLLLLTWIGG), and 347–367 (FIIIGQTASXMYFTIILIXMX).

It belongs to the cytochrome b family. In terms of assembly, the cytochrome bc1 complex contains 11 subunits: 3 respiratory subunits (MT-CYB, CYC1 and UQCRFS1), 2 core proteins (UQCRC1 and UQCRC2) and 6 low-molecular weight proteins (UQCRH/QCR6, UQCRB/QCR7, UQCRQ/QCR8, UQCR10/QCR9, UQCR11/QCR10 and a cleavage product of UQCRFS1). This cytochrome bc1 complex then forms a dimer. Heme b is required as a cofactor.

The protein resides in the mitochondrion inner membrane. Functionally, component of the ubiquinol-cytochrome c reductase complex (complex III or cytochrome b-c1 complex) that is part of the mitochondrial respiratory chain. The b-c1 complex mediates electron transfer from ubiquinol to cytochrome c. Contributes to the generation of a proton gradient across the mitochondrial membrane that is then used for ATP synthesis. In Thomomys umbrinus (Southern pocket gopher), this protein is Cytochrome b (MT-CYB).